The chain runs to 148 residues: Cell division protein SepF (148 aa).

The segment at 1–59 (MNNKFKDFFGFGDNDSYEERDAYEEHYDEQEEMQNSNRPTNSRDSNVVSIKAGQAGSGP) is disordered. The span at 33–48 (MQNSNRPTNSRDSNVV) shows a compositional bias: polar residues.

This sequence belongs to the SepF family. Homodimer. Interacts with FtsZ.

Its subcellular location is the cytoplasm. Its function is as follows. Cell division protein that is part of the divisome complex and is recruited early to the Z-ring. Probably stimulates Z-ring formation, perhaps through the cross-linking of FtsZ protofilaments. Its function overlaps with FtsA. The protein is Cell division protein SepF of Lactobacillus delbrueckii subsp. bulgaricus (strain ATCC BAA-365 / Lb-18).